Here is a 548-residue protein sequence, read N- to C-terminus: Asparagine--tRNA ligase, cytoplasmic (548 aa).

Residues 1–25 (MVLAELYVSDREGSDATGDGTKEKP) form a disordered region. The segment covering 8–25 (VSDREGSDATGDGTKEKP) has biased composition (basic and acidic residues). The residue at position 61 (Ser61) is a Phosphoserine. Positions 69-91 (MWHREQMKSESREKKEAEDSLRR) are disordered. Residues 71 to 91 (HREQMKSESREKKEAEDSLRR) show a composition bias toward basic and acidic residues. Lys244 is subject to N6-acetyllysine. Position 482 is a phosphoserine (Ser482). Lys490 is modified (N6-acetyllysine).

This sequence belongs to the class-II aminoacyl-tRNA synthetase family. Homodimer.

The protein localises to the cytoplasm. It carries out the reaction tRNA(Asn) + L-asparagine + ATP = L-asparaginyl-tRNA(Asn) + AMP + diphosphate + H(+). Its function is as follows. Catalyzes the attachment of asparagine to tRNA(Asn) in a two-step reaction: asparagine is first activated by ATP to form Asn-AMP and then transferred to the acceptor end of tRNA(Asn). In addition to its essential role in protein synthesis, acts as a signaling molecule that induced migration of CCR3-expressing cells. Has an essential role in the development of the cerebral cortex, being required for proper proliferation of radial glial cells. The protein is Asparagine--tRNA ligase, cytoplasmic of Homo sapiens (Human).